The primary structure comprises 586 residues: Putative butyrophilin subfamily 2 member A3 (586 aa).

The first 27 residues, 1-27, serve as a signal peptide directing secretion; the sequence is MEPAAALHFSRPASLLLLLSLCALVSA. Positions 28-139 constitute an Ig-like V-type domain; it reads QVTVVGPTDP…SCNEAILHLV (112 aa). Topologically, residues 28-246 are extracellular; the sequence is QVTVVGPTDP…SFMPSRSPCV (219 aa). 4 N-linked (GlcNAc...) asparagine glycosylation sites follow: asparagine 45, asparagine 112, asparagine 214, and asparagine 220. Cysteine 50 and cysteine 123 form a disulfide bridge. Residues 247–267 form a helical membrane-spanning segment; that stretch reads VILPVIMIILMIPIAICIYWI. Over 268-586 the chain is Cytoplasmic; the sequence is NNLQKEKKDS…VPQLPARKKV (319 aa). The 194-residue stretch at 281 to 474 folds into the B30.2/SPRY domain; the sequence is TFNLCLSLAG…ILICSAFTGA (194 aa).

Belongs to the immunoglobulin superfamily. BTN/MOG family.

It localises to the membrane. The protein is Putative butyrophilin subfamily 2 member A3 (BTN2A3P) of Homo sapiens (Human).